The chain runs to 685 residues: Stromal interaction molecule 1 (685 aa).

A signal peptide spans 1-22; that stretch reads MDVCVRLALWLLWGLLLHQGQS. The Extracellular portion of the chain corresponds to 23–213; that stretch reads LSHSHSEKAT…LLTRHNHLKD (191 aa). 2 EF-hand domains span residues 64-97 and 102-126; these read SFEAVRNIHKLMDDDANGDVDVEESDEFLREDLN and TVKHSTFHGEDKLISVEDLWKAWKS. Residues Asp76, Asp78, Asn80, Asp82, and Glu87 each contribute to the Ca(2+) site. N-linked (GlcNAc...) asparagine glycans are attached at residues Asn131 and Asn171. An SAM domain is found at 132–200; sequence WTVDEVVQWL…QLKALDTVLF (69 aa). A helical transmembrane segment spans residues 214–234; sequence FMLVVSIVIGVGGCWFAYIQN. The Cytoplasmic segment spans residues 235-685; the sequence is RYSKEHMKKM…LKIFKKPLKK (451 aa). Residues 248-442 are a coiled coil; that stretch reads LEGLHRAEQS…IEILCGFQIV (195 aa). Ser257 is modified (phosphoserine). Residues 344 to 442 are SOAR/CAD; it reads PEALQKWLQL…IEILCGFQIV (99 aa). The tract at residues 475-483 is contributes to fast Ca(2+)-dependent inactivation of CRAC channels; sequence DDVDDMDEE. Residues 490-499 are compositionally biased toward low complexity; sequence MQSPSLQSSV. The tract at residues 490-542 is disordered; it reads MQSPSLQSSVRQRLTEPQHGLGSQRDLTHSDSESSLHMSDRQRVAPKPPQMSR. Position 504 is a phosphothreonine (Thr504). Position 512 is a phosphoserine (Ser512). A compositionally biased stretch (basic and acidic residues) spans 515–532; the sequence is DLTHSDSESSLHMSDRQR. Thr517 is modified (phosphothreonine). Phosphoserine is present on residues Ser519, Ser521, Ser523, Ser524, Ser567, Ser575, Ser602, Ser608, Ser618, Ser621, and Ser628. The disordered stretch occupies residues 596–685; that stretch reads LMELSPSAPP…LKIFKKPLKK (90 aa). Over residues 608 to 620 the composition is skewed to low complexity; that stretch reads SPHLDSSRSHSPS. The short motif at 642-645 is the Microtubule tip localization signal element; that stretch reads TRIP. Residues 655–666 show a composition bias toward acidic residues; sequence EEDNGSIGEETD. Position 660 is a phosphoserine (Ser660). The residue at position 665 (Thr665) is a Phosphothreonine. Ser668 carries the phosphoserine modification. A compositionally biased stretch (basic residues) spans 670-685; sequence GRKKFPLKIFKKPLKK. Residues 672–685 form a required for generation of inwardly rectifying CRAC currents region; sequence KKFPLKIFKKPLKK.

Monomer in the presence of Ca(2+); it oligomerizes in absence of Ca(2+). Forms homooligomers and heterooligomers with STIM2. Interacts with pore-forming subunits of CRAC channels, ORAI1, ORAI2 and ORAI3; this interaction is potentiated upon Ca(2+) store depletion. Interacts (via the transmembrane region and the SOAR/CAD domain) with SPPL3; the interaction promotes the binding of STIM1 to ORAI1. Interacts (via the SOAR/CAD domain) with ORAI1. Interacts with MAPRE1; probably required for targeting to the growing microtubule plus ends. Interacts with CRACR2A/EFCAB4B; the interaction is direct and takes place in absence of Ca(2+). Forms a complex with CRACR2A/EFCAB4B and ORAI1 at low concentration of Ca(2+), the complex dissociates at elevated Ca(2+) concentrations. Interacts with SARAF, promoting a slow inactivation of STIM1-dependent SOCE activity, possibly by facilitating the deoligomerization of STIM1. Interacts with EFHB; the interaction takes place upon Ca(2+)-store depletion and inhibits the association with SARAF. Interacts with ASPH (isoform 8). Interacts with SLC35G1; intracellular Ca(2+)-dependent. May interact with ATP1A1, ATP2A2, ATP2B1, ATP2B4, KPNB1 and XPO1; through SLC35G1. Interacts with TMEM203. Interacts with STIMATE, promoting STIM1 conformational switch. Interacts with TMEM178A. Interacts with CASQ1 (via C-terminal end and preferentially with the monomeric form); this interaction increases in response to a depletion of intracellular Ca(2+), decreases both STIM1 aggregation and clustering, interaction of STIM1 with ORAI1 and store-operated Ca(2+) entry (SOCE) activity. Interacts with ADCY8. Glycosylation is required for cell surface expression. Post-translationally, phosphorylated predominantly on Ser residues. In terms of tissue distribution, ubiquitously expressed in various human primary cells and tumor cell lines.

It localises to the cell membrane. The protein resides in the endoplasmic reticulum membrane. It is found in the cytoplasm. Its subcellular location is the cytoskeleton. The protein localises to the sarcoplasmic reticulum. Acts as a Ca(2+) sensor that gates two major inward rectifying Ca(2+) channels at the plasma membrane: Ca(2+) release-activated Ca(2+) (CRAC) channels and arachidonate-regulated Ca(2+)-selective (ARC) channels. Plays a role in mediating store-operated Ca(2+) entry (SOCE), a Ca(2+) influx following depletion of intracellular Ca(2+) stores. Upon Ca(2+) depletion, translocates from the endoplasmic reticulum to the plasma membrane where it activates CRAC channel pore-forming subunits ORA1, ORA2 and ORAI3 to generate sustained and oscillatory Ca(2+) entry. Involved in enamel formation. The chain is Stromal interaction molecule 1 (STIM1) from Homo sapiens (Human).